The chain runs to 314 residues: Solute carrier family 25 member 33 (314 aa).

3 Solcar repeats span residues K4–T111, N119–Y206, and S224–L308. 6 consecutive transmembrane segments (helical) span residues L7–L27, V44–I58, G114–I134, L183–L203, F226–P246, and Q291–E311.

It belongs to the mitochondrial carrier (TC 2.A.29) family.

It localises to the mitochondrion inner membrane. Its function is as follows. Mitochondrial transporter that imports/exports pyrimidine nucleotides into and from mitochondria which participates in dendritic cell endocytosis. This Danio rerio (Zebrafish) protein is Solute carrier family 25 member 33 (slc25a33).